A 367-amino-acid polypeptide reads, in one-letter code: Aldo-keto reductase AMT2 (367 aa).

An NADP(+)-binding site is contributed by Asp-76. The active-site Proton donor is the Tyr-81. Position 173 (His-173) interacts with substrate. Residues 203–204, Gln-229, 258–268, and 330–338 contribute to the NADP(+) site; these read SS, GPLAAGKLARP, and SSVERMDEV. The disordered stretch occupies residues 346-367; that stretch reads LSDEEESRLEDPYKAQPPQGHS.

This sequence belongs to the aldo/keto reductase family.

The protein operates within mycotoxin biosynthesis. Functionally, aldo-keto reductase; part of the gene clusters that mediate the biosynthesis of AM-toxins, host-selective toxins (HSTs) causing Alternaria blotch on apple, a worldwide distributed disease. AM-toxins are cyclic depsipeptides containing the 3 residues 2-hydroxy-isovaleric acid (2-HIV), dehydroalanine, L-alanine which are common for all 3 AM-toxins I to III. The fourth precursor is L-alpha-amino-methoxyphenyl-valeric acid (L-Amv) for AM-toxin I, L-alpha-amino-phenyl-valeric acid (L-Apv) for AM-toxin II, and L-alpha-amino-hydroxyphenyl-valeric acid (L-Ahv) for AM-toxin III. AM-toxins have two target sites for affecting susceptible apple cells; they cause invagination of the plasma membrane and electrolyte loss and chloroplast disorganization. The non-ribosomal peptide synthetase AMT1 contains 4 catalytic modules and is responsible for activation of each residue in AM-toxin. The aldo-keto reductase AMT2 catalyzes the conversion of 2-keto-isovaleric acid (2-KIV) to 2-hydroxy-isovaleric acid (2-HIV), one of the precursor residues incorporated by AMT1 during AM-toxin biosynthesis, by reduction of its ketone to an alcohol. The cytochrome P450 monooxygenase AMT3 and the thioesterase AMT4 are also important for AM-toxin production, but their exact function within the AM-toxin biosynthesis are not known yet. Up to 21 proteins (including AMT1 to AMT4) are predicted to be involved in AM-toxin biosynthesis since their expression ishighly up-regulated in AM-toxin-producing cultures. The protein is Aldo-keto reductase AMT2 of Alternaria alternata (Alternaria rot fungus).